A 451-amino-acid chain; its full sequence is Phosphoglucosamine mutase (451 aa).

Catalysis depends on Ser107, which acts as the Phosphoserine intermediate. Residues Ser107, Asp246, Asp248, and Asp250 each coordinate Mg(2+). Ser107 carries the phosphoserine modification.

Belongs to the phosphohexose mutase family. Mg(2+) serves as cofactor. Post-translationally, activated by phosphorylation.

The catalysed reaction is alpha-D-glucosamine 1-phosphate = D-glucosamine 6-phosphate. In terms of biological role, catalyzes the conversion of glucosamine-6-phosphate to glucosamine-1-phosphate. This is Phosphoglucosamine mutase from Burkholderia lata (strain ATCC 17760 / DSM 23089 / LMG 22485 / NCIMB 9086 / R18194 / 383).